The primary structure comprises 905 residues: Cation-transporting ATPase pma1 (905 aa).

Transmembrane regions (helical) follow at residues 60 to 80 (FLLQ…TVKA), 81 to 101 (FLGS…NAII), 248 to 268 (FSHT…AVGW), and 283 to 303 (ALAV…TLAI). Asp-333 acts as the 4-aspartylphosphate intermediate in catalysis. 5 consecutive transmembrane segments (helical) span residues 716–736 (ILIS…VLWL), 774–794 (LLHR…GMFE), 809–829 (MAIQ…SQLG), 848–868 (ILLL…QLPF), and 880–900 (WQQW…AILA).

It belongs to the cation transport ATPase (P-type) (TC 3.A.3) family. Type IIA subfamily.

Its subcellular location is the cell membrane. The catalysed reaction is ATP + H2O = ADP + phosphate + H(+). Its function is as follows. Could mediate calcium influx. The protein is Cation-transporting ATPase pma1 (pma1) of Synechocystis sp. (strain ATCC 27184 / PCC 6803 / Kazusa).